Reading from the N-terminus, the 362-residue chain is Phosphoserine aminotransferase (362 aa).

The L-glutamate site is built by S9 and R42. Pyridoxal 5'-phosphate contacts are provided by residues 76-77, W102, T153, D174, and Q197; that span reads GR. K198 carries the post-translational modification N6-(pyridoxal phosphate)lysine. 239–240 is a pyridoxal 5'-phosphate binding site; it reads NT.

Belongs to the class-V pyridoxal-phosphate-dependent aminotransferase family. SerC subfamily. As to quaternary structure, homodimer. Pyridoxal 5'-phosphate is required as a cofactor.

The protein resides in the cytoplasm. The catalysed reaction is O-phospho-L-serine + 2-oxoglutarate = 3-phosphooxypyruvate + L-glutamate. It carries out the reaction 4-(phosphooxy)-L-threonine + 2-oxoglutarate = (R)-3-hydroxy-2-oxo-4-phosphooxybutanoate + L-glutamate. It functions in the pathway amino-acid biosynthesis; L-serine biosynthesis; L-serine from 3-phospho-D-glycerate: step 2/3. The protein operates within cofactor biosynthesis; pyridoxine 5'-phosphate biosynthesis; pyridoxine 5'-phosphate from D-erythrose 4-phosphate: step 3/5. Catalyzes the reversible conversion of 3-phosphohydroxypyruvate to phosphoserine and of 3-hydroxy-2-oxo-4-phosphonooxybutanoate to phosphohydroxythreonine. This chain is Phosphoserine aminotransferase, found in Escherichia coli O7:K1 (strain IAI39 / ExPEC).